A 381-amino-acid chain; its full sequence is Ceropsin (381 aa).

Topologically, residues 1-62 (MSISMDAGPG…MNPLWHALLG (62 aa)) are extracellular. The N-linked (GlcNAc...) asparagine glycan is linked to Asn-28. Residues 63–83 (FTIGVLGFISMMGNGMVIYIF) form a helical membrane-spanning segment. Residues 84–96 (MTTKNLKTPSNLL) are Cytoplasmic-facing. Residues 97–117 (VVNLAFSDFLMMCAMSPAMVI) traverse the membrane as a helical segment. At 118-133 (NCYNETWVFGPFACEL) the chain is on the extracellular side. N-linked (GlcNAc...) asparagine glycosylation is present at Asn-121. Cysteines 131 and 208 form a disulfide. Residues 134 to 154 (YGCAGSLFGCASIWTMTMIAF) traverse the membrane as a helical segment. Residues 155–173 (DRYNVIVKGIAAKPMTNNG) are Cytoplasmic-facing. A helical membrane pass occupies residues 174-194 (ALLRILGIWAFSLAWTVAPFF). At 195 to 221 (GWNRYVPEGNMTACGTDYLTKDWFSRS) the chain is on the extracellular side. The N-linked (GlcNAc...) asparagine glycan is linked to Asn-204. Residues 222-242 (YIVVYSVFVYFAPLLLIVYSY) form a helical membrane-spanning segment. At 243–284 (YYIVQAVSAHEKAMREQAKKMNVASLRSSEAANTSTECKLAK) the chain is on the cytoplasmic side. A helical transmembrane segment spans residues 285 to 305 (VALMTISLWFMAWTPYLVINY). Residues 306–316 (TGILESAPISP) lie on the Extracellular side of the membrane. The chain crosses the membrane as a helical span at residues 317 to 339 (LATIWGSLFAKANAVYNPIVYGI). The Cytoplasmic portion of the chain corresponds to 340–381 (SHPKYQAALYKRFPVLQCHSTTTDEASSVASGTTVMEEKPTA).

This sequence belongs to the G-protein coupled receptor 1 family. Opsin subfamily. Expressed bilaterally in dorsal and ventral anterior protocerebral cells and bilaterally in the dorsal posterior protocerebral and lateral posterior tritocerebral cells (at protein level). Expressed in the larval brain but not in the subesophageal ganglion or thoracic ganglion.

The protein localises to the membrane. Functionally, visual pigments are the light-absorbing molecules that mediate vision. They consist of an apoprotein, opsin, covalently linked to cis-retinal. May play a role in photoperiodic photoreception. The protein is Ceropsin of Bombyx mori (Silk moth).